The primary structure comprises 290 residues: Nucleotide-binding protein LAR_0375 (290 aa).

13 to 20 (GMSGAGKT) contacts ATP. GTP is bound at residue 63 to 66 (DMRS).

It belongs to the RapZ-like family.

Its function is as follows. Displays ATPase and GTPase activities. The sequence is that of Nucleotide-binding protein LAR_0375 from Limosilactobacillus reuteri subsp. reuteri (strain JCM 1112) (Lactobacillus reuteri).